A 432-amino-acid chain; its full sequence is Trigger factor (432 aa).

The 86-residue stretch at 161 to 246 folds into the PPIase FKBP-type domain; sequence GSRATIDFVG…LNKVEARELP (86 aa).

This sequence belongs to the FKBP-type PPIase family. Tig subfamily.

Its subcellular location is the cytoplasm. It carries out the reaction [protein]-peptidylproline (omega=180) = [protein]-peptidylproline (omega=0). In terms of biological role, involved in protein export. Acts as a chaperone by maintaining the newly synthesized protein in an open conformation. Functions as a peptidyl-prolyl cis-trans isomerase. In Vibrio atlanticus (strain LGP32) (Vibrio splendidus (strain Mel32)), this protein is Trigger factor.